Consider the following 697-residue polypeptide: Zinc finger and BTB domain-containing protein 24 (697 aa).

The region spanning 10-133 (GQLVVHSDAH…AYTDFQNNHS (124 aa)) is the BTB domain. Over residues 131–142 (NHSSPKPTTLNT) the composition is skewed to polar residues. Disordered regions lie at residues 131–176 (NHSS…EEKS) and 209–254 (EQIA…SRYS). A DNA-binding region (a.T hook) is located at residues 159-171 (KRKRGRPKKVNTL). Positions 212-245 (AAKEKEESEPTCEPSREEEMPVEKDENYDPKTED) are enriched in basic and acidic residues. 8 consecutive C2H2-type zinc fingers follow at residues 294–316 (ARCK…QRSH), 322–344 (FKCN…TRMH), 350–372 (YTCT…MSLH), 378–400 (FTCD…YRVH), 406–428 (PECK…LRTH), 434–456 (FTCE…IRIH), 462–484 (YSCG…CILH), and 490–512 (FSCP…LKIH). Positions 652 to 697 (QEQTEELHLATSTSDPAQHLQLTQEPGPPPPTHHVPQPTPLGQEQS) are disordered. Residues 677 to 690 (PGPPPPTHHVPQPT) show a composition bias toward pro residues.

This sequence belongs to the krueppel C2H2-type zinc-finger protein family. Interacts with MN1. As to expression, widely expressed, with highest levels in naive B-cells.

It localises to the nucleus. May be involved in BMP2-induced transcription. This is Zinc finger and BTB domain-containing protein 24 (ZBTB24) from Homo sapiens (Human).